Reading from the N-terminus, the 192-residue chain is Pyridoxal 5'-phosphate synthase subunit PdxT (192 aa).

53-55 is an L-glutamine binding site; that stretch reads GES. The active-site Nucleophile is the C82. L-glutamine contacts are provided by residues R108 and 134 to 135; that span reads IR. Residues H170 and E172 each act as charge relay system in the active site.

Belongs to the glutaminase PdxT/SNO family. In the presence of PdxS, forms a dodecamer of heterodimers. Only shows activity in the heterodimer.

It carries out the reaction aldehydo-D-ribose 5-phosphate + D-glyceraldehyde 3-phosphate + L-glutamine = pyridoxal 5'-phosphate + L-glutamate + phosphate + 3 H2O + H(+). It catalyses the reaction L-glutamine + H2O = L-glutamate + NH4(+). Its pathway is cofactor biosynthesis; pyridoxal 5'-phosphate biosynthesis. Functionally, catalyzes the hydrolysis of glutamine to glutamate and ammonia as part of the biosynthesis of pyridoxal 5'-phosphate. The resulting ammonia molecule is channeled to the active site of PdxS. This is Pyridoxal 5'-phosphate synthase subunit PdxT from Methanothermobacter thermautotrophicus (strain ATCC 29096 / DSM 1053 / JCM 10044 / NBRC 100330 / Delta H) (Methanobacterium thermoautotrophicum).